Consider the following 360-residue polypeptide: Ribosomal RNA large subunit methyltransferase M (360 aa).

S-adenosyl-L-methionine contacts are provided by residues Ser-187, 220–223 (CPGG), Asp-239, Asp-259, and Asp-276. The active-site Proton acceptor is the Lys-305.

Belongs to the class I-like SAM-binding methyltransferase superfamily. RNA methyltransferase RlmE family. RlmM subfamily. As to quaternary structure, monomer.

Its subcellular location is the cytoplasm. It carries out the reaction cytidine(2498) in 23S rRNA + S-adenosyl-L-methionine = 2'-O-methylcytidine(2498) in 23S rRNA + S-adenosyl-L-homocysteine + H(+). Its function is as follows. Catalyzes the 2'-O-methylation at nucleotide C2498 in 23S rRNA. This chain is Ribosomal RNA large subunit methyltransferase M, found in Shewanella sediminis (strain HAW-EB3).